The sequence spans 273 residues: 2,3,4,5-tetrahydropyridine-2,6-dicarboxylate N-succinyltransferase (273 aa).

Positions 104 and 141 each coordinate substrate.

The protein belongs to the transferase hexapeptide repeat family. In terms of assembly, homotrimer.

The protein localises to the cytoplasm. It catalyses the reaction (S)-2,3,4,5-tetrahydrodipicolinate + succinyl-CoA + H2O = (S)-2-succinylamino-6-oxoheptanedioate + CoA. The protein operates within amino-acid biosynthesis; L-lysine biosynthesis via DAP pathway; LL-2,6-diaminopimelate from (S)-tetrahydrodipicolinate (succinylase route): step 1/3. The protein is 2,3,4,5-tetrahydropyridine-2,6-dicarboxylate N-succinyltransferase of Neisseria meningitidis serogroup C (strain 053442).